Reading from the N-terminus, the 636-residue chain is MAARPLSRMLRRLLRSSARSCSSGAPVTQPCPGESARAASEEVSRRRQFLREHAAPFSAFLTDSFGRQHSYLRISLTEKCNLRCQYCMPEEGVPLTPKANLLTTEEILTLARLFVKEGIDKIRLTGGEPLIRPDVVDIVAQLQRLEGLRTIGVTTNGINLARLLPQLQKAGLSAINISLDTLVPAKFEFIVRRKGFHKVMEGIHKAIELGYNPVKVNCVVMRGLNEDELLDFAALTEGLPLDVRFIEYMPFDGNKWNFKKMVSYKEMLDTVRQQWPELEKVPEEESSTAKAFKIPGFQGQISFITSMSEHFCGTCNRLRITADGNLKVCLFGNSEVSLRDHLRAGASEQELLRIIGAAVGRKKRQHAGMFSISQMKNRPMILIELFLMFPNSPPANPSIFSWDPLHVQGLRPRMSFSSQVATLWKGCRVPQTPPLAQQRLGSGSFQRHYTSRADSDANSKCLSPGSWASAAPSGPQLTSEQLTHVDSEGRAAMVDVGRKPDTERVAVASAVVLLGPVAFKLVQQNQLKKGDALVVAQLAGVQAAKVTSQLIPLCHHVALSHIQVQLELDSTRHAVKIQASCRARGPTGVEMEALTSAAVAALTLYDMCKAVSRDIVLEEIKLISKTGGQRGDFHRA.

The interval 1-383 (MAARPLSRML…QMKNRPMILI (383 aa)) is molybdenum cofactor biosynthesis protein A. Position 64 is a phosphoserine (serine 64). The Radical SAM core domain maps to 64 to 277 (SFGRQHSYLR…LDTVRQQWPE (214 aa)). Position 73 (arginine 73) interacts with GTP. Residues cysteine 80 and cysteine 84 each coordinate [4Fe-4S] cluster. Tyrosine 86 contacts S-adenosyl-L-methionine. Cysteine 87 serves as a coordination point for [4Fe-4S] cluster. Residue arginine 123 participates in GTP binding. Glycine 127 contributes to the S-adenosyl-L-methionine binding site. Threonine 154 contacts GTP. An S-adenosyl-L-methionine-binding site is contributed by serine 178. Lysine 198 is modified (N6-acetyllysine). A GTP-binding site is contributed by lysine 215. Methionine 249 provides a ligand contact to S-adenosyl-L-methionine. Cysteine 312 and cysteine 315 together coordinate [4Fe-4S] cluster. GTP is bound at residue 317-319 (RLR). Cysteine 329 is a binding site for [4Fe-4S] cluster. The segment at 414–636 (MSFSSQVATL…GGQRGDFHRA (223 aa)) is molybdenum cofactor biosynthesis protein C. The segment at 456–480 (DANSKCLSPGSWASAAPSGPQLTSE) is disordered. The segment covering 463–475 (SPGSWASAAPSGP) has biased composition (low complexity). Lysine 528 is modified (N6-acetyllysine). Aspartate 606 serves as the catalytic For molybdenum cofactor biosynthesis protein C activity.

It in the C-terminal section; belongs to the MoaC family. In the N-terminal section; belongs to the radical SAM superfamily. MoaA family. Isoform MOCS1A and isoform MOCS1B probably form a heterooligomer. [4Fe-4S] cluster is required as a cofactor. Isoform MOCS1A and isoform 2 are widely expressed.

It carries out the reaction GTP + AH2 + S-adenosyl-L-methionine = (8S)-3',8-cyclo-7,8-dihydroguanosine 5'-triphosphate + 5'-deoxyadenosine + L-methionine + A + H(+). The catalysed reaction is (8S)-3',8-cyclo-7,8-dihydroguanosine 5'-triphosphate = cyclic pyranopterin phosphate + diphosphate. Its pathway is cofactor biosynthesis; molybdopterin biosynthesis. Functionally, isoform MOCS1A and isoform MOCS1B probably form a complex that catalyzes the conversion of 5'-GTP to cyclic pyranopterin monophosphate (cPMP). MOCS1A catalyzes the cyclization of GTP to (8S)-3',8-cyclo-7,8-dihydroguanosine 5'-triphosphate and MOCS1B catalyzes the subsequent conversion of (8S)-3',8-cyclo-7,8-dihydroguanosine 5'-triphosphate to cPMP. The chain is Molybdenum cofactor biosynthesis protein 1 (MOCS1) from Homo sapiens (Human).